The following is a 292-amino-acid chain: Malectin (292 aa).

An N-terminal signal peptide occupies residues 1-28; that stretch reads MLGAWAVEGTAVALLRLLLLLLPPAIRG. Residues 29–269 lie on the Lumenal side of the membrane; that stretch reads PGLGVAGVAG…TPNPYASDNS (241 aa). A carbohydrate is bound by residues Y82, Y104, Y131, F132, and D201. Residues 221 to 265 form a disordered region; the sequence is LQPHPGLEKKEEEEEEEEYDEGSNLKKQTNKNRVQSGPRTPNPYA. Residues 231 to 241 show a composition bias toward acidic residues; that stretch reads EEEEEEEEYDE. Residues 245–265 show a composition bias toward polar residues; sequence LKKQTNKNRVQSGPRTPNPYA. N268 carries an N-linked (GlcNAc...) asparagine glycan. A helical membrane pass occupies residues 270-290; it reads SLMFPILVAFGVFIPTLFCLC. The Cytoplasmic portion of the chain corresponds to 291-292; that stretch reads RL.

Belongs to the malectin family. In terms of assembly, interacts with the oligosaccharyltransferase (OST) complex.

It localises to the endoplasmic reticulum membrane. Functionally, carbohydrate-binding protein with a strong ligand preference for Glc2-N-glycan. May play a role in the early steps of protein N-glycosylation. The sequence is that of Malectin from Homo sapiens (Human).